Reading from the N-terminus, the 378-residue chain is Ribosomal RNA large subunit methyltransferase G (378 aa).

This sequence belongs to the methyltransferase superfamily. RlmG family.

It is found in the cytoplasm. The catalysed reaction is guanosine(1835) in 23S rRNA + S-adenosyl-L-methionine = N(2)-methylguanosine(1835) in 23S rRNA + S-adenosyl-L-homocysteine + H(+). Its function is as follows. Specifically methylates the guanine in position 1835 (m2G1835) of 23S rRNA. The sequence is that of Ribosomal RNA large subunit methyltransferase G from Shigella dysenteriae serotype 1 (strain Sd197).